An 86-amino-acid polypeptide reads, in one-letter code: Cell division topological specificity factor (86 aa).

Belongs to the MinE family.

Functionally, prevents the cell division inhibition by proteins MinC and MinD at internal division sites while permitting inhibition at polar sites. This ensures cell division at the proper site by restricting the formation of a division septum at the midpoint of the long axis of the cell. The chain is Cell division topological specificity factor from Bordetella petrii (strain ATCC BAA-461 / DSM 12804 / CCUG 43448).